A 394-amino-acid polypeptide reads, in one-letter code: Phosphopentomutase (394 aa).

Residues Asp-14, Asp-287, His-292, Asp-328, His-329, and His-340 each coordinate Mn(2+).

This sequence belongs to the phosphopentomutase family. Mn(2+) serves as cofactor.

The protein localises to the cytoplasm. It carries out the reaction 2-deoxy-alpha-D-ribose 1-phosphate = 2-deoxy-D-ribose 5-phosphate. The enzyme catalyses alpha-D-ribose 1-phosphate = D-ribose 5-phosphate. It functions in the pathway carbohydrate degradation; 2-deoxy-D-ribose 1-phosphate degradation; D-glyceraldehyde 3-phosphate and acetaldehyde from 2-deoxy-alpha-D-ribose 1-phosphate: step 1/2. Functionally, isomerase that catalyzes the conversion of deoxy-ribose 1-phosphate (dRib-1-P) and ribose 1-phosphate (Rib-1-P) to deoxy-ribose 5-phosphate (dRib-5-P) and ribose 5-phosphate (Rib-5-P), respectively. This chain is Phosphopentomutase, found in Listeria monocytogenes serovar 1/2a (strain ATCC BAA-679 / EGD-e).